The sequence spans 253 residues: Protein C1orf43 homolog (253 aa).

The chain crosses the membrane as a helical span at residues 11 to 31 (VNVVLVMAYGSLVFVLLFIFV).

It localises to the membrane. The protein localises to the golgi apparatus. It is found in the mitochondrion. Functionally, general regulator of phagocytosis. Required to uptake Gram negative bacterium by macrophages. The sequence is that of Protein C1orf43 homolog from Mus musculus (Mouse).